The sequence spans 454 residues: Bifunctional protein GlmU (454 aa).

Residues 1–228 are pyrophosphorylase; the sequence is MNKCAIILAA…FEETLGVNSR (228 aa). UDP-N-acetyl-alpha-D-glucosamine is bound by residues 8-11, Lys22, Gln73, and 78-79; these read LAAG and GT. A Mg(2+)-binding site is contributed by Asp103. Positions 140, 154, 169, and 226 each coordinate UDP-N-acetyl-alpha-D-glucosamine. Residue Asn226 coordinates Mg(2+). The interval 229-249 is linker; that stretch reads AELAKVESIMRNRINRTHLDN. The segment at 250 to 454 is N-acetyltransferase; the sequence is GVTIIDPLNT…EGWVERKKLK (205 aa). 2 residues coordinate UDP-N-acetyl-alpha-D-glucosamine: Arg331 and Lys349. Residue His361 is the Proton acceptor of the active site. UDP-N-acetyl-alpha-D-glucosamine contacts are provided by Tyr364 and Asn375. Acetyl-CoA-binding positions include 384–385, Ala421, and Arg438; that span reads NY.

It in the N-terminal section; belongs to the N-acetylglucosamine-1-phosphate uridyltransferase family. The protein in the C-terminal section; belongs to the transferase hexapeptide repeat family. In terms of assembly, homotrimer. It depends on Mg(2+) as a cofactor.

It localises to the cytoplasm. It catalyses the reaction alpha-D-glucosamine 1-phosphate + acetyl-CoA = N-acetyl-alpha-D-glucosamine 1-phosphate + CoA + H(+). It carries out the reaction N-acetyl-alpha-D-glucosamine 1-phosphate + UTP + H(+) = UDP-N-acetyl-alpha-D-glucosamine + diphosphate. Its pathway is nucleotide-sugar biosynthesis; UDP-N-acetyl-alpha-D-glucosamine biosynthesis; N-acetyl-alpha-D-glucosamine 1-phosphate from alpha-D-glucosamine 6-phosphate (route II): step 2/2. The protein operates within nucleotide-sugar biosynthesis; UDP-N-acetyl-alpha-D-glucosamine biosynthesis; UDP-N-acetyl-alpha-D-glucosamine from N-acetyl-alpha-D-glucosamine 1-phosphate: step 1/1. It functions in the pathway bacterial outer membrane biogenesis; LPS lipid A biosynthesis. In terms of biological role, catalyzes the last two sequential reactions in the de novo biosynthetic pathway for UDP-N-acetylglucosamine (UDP-GlcNAc). The C-terminal domain catalyzes the transfer of acetyl group from acetyl coenzyme A to glucosamine-1-phosphate (GlcN-1-P) to produce N-acetylglucosamine-1-phosphate (GlcNAc-1-P), which is converted into UDP-GlcNAc by the transfer of uridine 5-monophosphate (from uridine 5-triphosphate), a reaction catalyzed by the N-terminal domain. This Clostridium perfringens (strain ATCC 13124 / DSM 756 / JCM 1290 / NCIMB 6125 / NCTC 8237 / Type A) protein is Bifunctional protein GlmU.